A 367-amino-acid chain; its full sequence is Peptide chain release factor 2 (367 aa).

At glutamine 254 the chain carries N5-methylglutamine.

This sequence belongs to the prokaryotic/mitochondrial release factor family. Post-translationally, methylated by PrmC. Methylation increases the termination efficiency of RF2.

It is found in the cytoplasm. Peptide chain release factor 2 directs the termination of translation in response to the peptide chain termination codons UGA and UAA. The chain is Peptide chain release factor 2 from Leptospira interrogans serogroup Icterohaemorrhagiae serovar copenhageni (strain Fiocruz L1-130).